A 289-amino-acid chain; its full sequence is 4-hydroxybenzoate octaprenyltransferase (289 aa).

A run of 8 helical transmembrane segments spans residues 23–43 (IGAL…TPGV), 46–66 (LWIL…GCVV), 99–119 (LFVV…TMTI), 141–161 (LPQV…FAAV), 163–183 (ESVP…AVAY), 213–233 (LIIG…GWLN), 234–254 (GLGW…VYQQ), and 268–288 (AFMN…MSYV).

This sequence belongs to the UbiA prenyltransferase family. Requires Mg(2+) as cofactor.

It localises to the cell inner membrane. It carries out the reaction all-trans-octaprenyl diphosphate + 4-hydroxybenzoate = 4-hydroxy-3-(all-trans-octaprenyl)benzoate + diphosphate. The protein operates within cofactor biosynthesis; ubiquinone biosynthesis. Catalyzes the prenylation of para-hydroxybenzoate (PHB) with an all-trans polyprenyl group. Mediates the second step in the final reaction sequence of ubiquinone-8 (UQ-8) biosynthesis, which is the condensation of the polyisoprenoid side chain with PHB, generating the first membrane-bound Q intermediate 3-octaprenyl-4-hydroxybenzoate. The protein is 4-hydroxybenzoate octaprenyltransferase of Citrobacter koseri (strain ATCC BAA-895 / CDC 4225-83 / SGSC4696).